Here is a 404-residue protein sequence, read N- to C-terminus: Ubiquitin-like modifier-activating enzyme 5 (404 aa).

Serine 45 carries the phosphoserine modification. ATP contacts are provided by glycine 83, aspartate 104, lysine 127, asparagine 150, and asparagine 184. Zn(2+) is bound by residues cysteine 226 and cysteine 229. Cysteine 250 acts as the Glycyl thioester intermediate in catalysis. Residues cysteine 303 and cysteine 308 each coordinate Zn(2+). The UFM1-interacting sequence (UIS) motif lies at 334–346 (IIHEDNEWGIELV). The interval 347–377 (SEISEEELKKSSGPIPDLPEGIIVAYTVPQK) is linker. Phosphoserine is present on residues serine 358 and serine 393. The UFC1-binding sequence (UFC) motif lies at 389-404 (DSGESLEDLMAKMKNI).

Belongs to the ubiquitin-activating E1 family. UBA5 subfamily. As to quaternary structure, homodimer; homodimerization is required for UFM1 activation. Interacts (via UIS motif) with UFM1; binds UFM1 via a trans-binding mechanism in which UFM1 interacts with distinct sites in both subunits of the UBA5 homodimer. Interacts (via C-terminus) with UFC1. Interacts (via UIS motif) with GABARAPL2 and, with lower affinity, with GABARAP and GABARAPL1.

Its subcellular location is the cytoplasm. The protein resides in the nucleus. It localises to the endoplasmic reticulum membrane. The protein localises to the golgi apparatus. Its function is as follows. E1-like enzyme which specifically catalyzes the first step in ufmylation. Activates UFM1 by first adenylating its C-terminal glycine residue with ATP, and thereafter linking this residue to the side chain of a cysteine residue in E1, yielding a UFM1-E1 thioester and free AMP. Activates UFM1 via a trans-binding mechanism, in which UFM1 interacts with distinct sites in both subunits of the UBA5 homodimer. Trans-binding also promotes stabilization of the UBA5 homodimer, and enhances ATP-binding. Transfer of UFM1 from UBA5 to the E2-like enzyme UFC1 also takes place using a trans mechanism. Ufmylation plays a key role in various processes, such as ribosome recycling, response to DNA damage, interferon response or reticulophagy (also called ER-phagy). Ufmylation is essential for erythroid differentiation of both megakaryocytes and erythrocytes. This Bos taurus (Bovine) protein is Ubiquitin-like modifier-activating enzyme 5.